Consider the following 504-residue polypeptide: D-alanine--D-alanyl carrier protein ligase (504 aa).

Position 152 to 153 (threonine 152 to serine 153) interacts with ATP. Residue aspartate 197 coordinates D-alanine. An ATP-binding site is contributed by asparagine 292–threonine 297. Residue valine 301 participates in D-alanine binding. Residues aspartate 383, tyrosine 394–arginine 397, and lysine 492 each bind ATP. Lysine 492 serves as a coordination point for D-alanine.

It belongs to the ATP-dependent AMP-binding enzyme family. DltA subfamily.

The protein localises to the cytoplasm. It carries out the reaction holo-[D-alanyl-carrier protein] + D-alanine + ATP = D-alanyl-[D-alanyl-carrier protein] + AMP + diphosphate. Its pathway is cell wall biogenesis; lipoteichoic acid biosynthesis. In terms of biological role, catalyzes the first step in the D-alanylation of lipoteichoic acid (LTA), the activation of D-alanine and its transfer onto the D-alanyl carrier protein (Dcp) DltC. In an ATP-dependent two-step reaction, forms a high energy D-alanyl-AMP intermediate, followed by transfer of the D-alanyl residue as a thiol ester to the phosphopantheinyl prosthetic group of the Dcp. D-alanylation of LTA plays an important role in modulating the properties of the cell wall in Gram-positive bacteria, influencing the net charge of the cell wall. The protein is D-alanine--D-alanyl carrier protein ligase of Bacillus cereus (strain G9842).